Consider the following 617-residue polypeptide: Probable endochitinase (617 aa).

Residues 53 to 426 form the GH18 domain; sequence YIRPCYFTNW…SVIAKELGGV (374 aa). The cysteines at positions 57 and 82 are disulfide-linked. Chitin-binding positions include 109–110 and 136–139; these read DW and GGWS. Glu179 acts as the Proton donor in catalysis. Residues Tyr180 and 245-248 each bind chitin; that span reads MSYD. N-linked (GlcNAc...) asparagine glycosylation occurs at Asn310. Trp394 is a binding site for chitin. Chitin-binding type-2 domains follow at residues 478–534 and 563–617; these read TNVC…GCSV and AFKC…KCAK. 2 disulfide bridges follow: Cys511–Cys524 and Cys594–Cys607.

The protein belongs to the glycosyl hydrolase 18 family. Chitinase class II subfamily.

The enzyme catalyses Random endo-hydrolysis of N-acetyl-beta-D-glucosaminide (1-&gt;4)-beta-linkages in chitin and chitodextrins.. This chain is Probable endochitinase (cht-1), found in Caenorhabditis elegans.